We begin with the raw amino-acid sequence, 212 residues long: Dihydrophenazinedicarboxylate synthase (212 aa).

Serine 8 is a substrate binding site. Residues 63–66 (RVIA) and 78–79 (CT) contribute to the FMN site. Residue histidine 80 coordinates substrate. FMN is bound by residues 84-85 (RK) and glutamine 107. Positions 129 and 137 each coordinate substrate. FMN contacts are provided by residues 142–143 (QS) and arginine 195.

It belongs to the pyridoxamine 5'-phosphate oxidase family. FMN serves as cofactor.

It carries out the reaction (1R,6R)-1,4,5,5a,6,9-hexahydrophenazine-1,6-dicarboxylate + O2 = (1R,10aS)-1,4,10,10a-tetrahydrophenazine-1,6-dicarboxylate + H2O2. The catalysed reaction is (1R,10aS)-1,4,10,10a-tetrahydrophenazine-1,6-dicarboxylate + O2 = (5aS)-5,5a-dihydrophenazine-1,6-dicarboxylate + H2O2. It catalyses the reaction (1R,10aS)-1,4,10,10a-tetrahydrophenazine-1-carboxylate + O2 = (10aS)-10,10a-dihydrophenazine-1-carboxylate + H2O2. The enzyme catalyses (1R)-1,4,5,10-tetrahydrophenazine-1-carboxylate + O2 = (10aS)-10,10a-dihydrophenazine-1-carboxylate + H2O2. Its pathway is antibiotic biosynthesis; phenazine biosynthesis. In terms of biological role, involved in the biosynthesis of the antibiotic phenazine, a nitrogen-containing heterocyclic molecule having important roles in virulence, competition and biological control. Catalyzes several oxidations in the terminal steps of core phenazine biosynthesis. It oxidizes both hexahydrophenazine-1,6-dicarboxylic acid (HHPDC) and tetrahydrophenazine-1-carboxylic acid (THPCA) and thereby contributes to the generation of both phenazine-1,6-dicarboxylic acid (PDC) and phenazine-1-carboxylic acid (PCA). It synthesizes phenazines in their reduced form, which are the likely end products in vivo. The sequence is that of Dihydrophenazinedicarboxylate synthase from Burkholderia lata (strain ATCC 17760 / DSM 23089 / LMG 22485 / NCIMB 9086 / R18194 / 383).